We begin with the raw amino-acid sequence, 852 residues long: Leucine--tRNA ligase (852 aa).

The 'HIGH' region motif lies at 41–51 (PYPSGRIHIGH). Positions 623-627 (KMSKS) match the 'KMSKS' region motif. K626 is a binding site for ATP.

It belongs to the class-I aminoacyl-tRNA synthetase family.

It localises to the cytoplasm. The enzyme catalyses tRNA(Leu) + L-leucine + ATP = L-leucyl-tRNA(Leu) + AMP + diphosphate. This chain is Leucine--tRNA ligase, found in Ruegeria pomeroyi (strain ATCC 700808 / DSM 15171 / DSS-3) (Silicibacter pomeroyi).